Here is a 96-residue protein sequence, read N- to C-terminus: Prokineticin Bm8-f (96 aa).

A signal peptide spans 1 to 19; sequence MKCFAQIVVLLLVIAFSHG. Intrachain disulfides connect C26–C38, C32–C50, C37–C78, C60–C86, and C80–C95.

Belongs to the AVIT (prokineticin) family. Expressed by the skin glands.

It localises to the secreted. Functionally, potent agonist for both PKR1/PROKR1 and PKR2/PROKR2, and inducer of a potent and long-lasting hyperalgesia. Also potentiates capsaicin-induced TRPV1 current, when tested on DRG neurons. At subnanomolar concentrations, this protein both induces potent chemotaxis of macrophages and stimulates LPS-induced production of the pro-inflammatory cytokines IL-1 and IL-12. In vivo, potently stimulates the contraction of the guinea-pig gastrointestinal (GI) smooth muscle (nanomolar concentration). The protein is Prokineticin Bm8-f of Bombina maxima (Giant fire-bellied toad).